The following is a 360-amino-acid chain: S-adenosylmethionine:tRNA ribosyltransferase-isomerase (360 aa).

It belongs to the QueA family. As to quaternary structure, monomer.

It localises to the cytoplasm. The enzyme catalyses 7-aminomethyl-7-carbaguanosine(34) in tRNA + S-adenosyl-L-methionine = epoxyqueuosine(34) in tRNA + adenine + L-methionine + 2 H(+). It participates in tRNA modification; tRNA-queuosine biosynthesis. Functionally, transfers and isomerizes the ribose moiety from AdoMet to the 7-aminomethyl group of 7-deazaguanine (preQ1-tRNA) to give epoxyqueuosine (oQ-tRNA). This chain is S-adenosylmethionine:tRNA ribosyltransferase-isomerase, found in Rhodopseudomonas palustris (strain ATCC BAA-98 / CGA009).